Consider the following 56-residue polypeptide: Large ribosomal subunit protein bL32A (56 aa).

Residues 1–56 (MAVPARRTSKAKKNKRRTHKGLTAPGLSRDSETGEYRMSHRISPDGTYKGRTIIEK) are disordered. Over residues 7–20 (RTSKAKKNKRRTHK) the composition is skewed to basic residues. The span at 29–38 (RDSETGEYRM) shows a compositional bias: basic and acidic residues.

The protein belongs to the bacterial ribosomal protein bL32 family.

The chain is Large ribosomal subunit protein bL32A (rpmF1) from Listeria innocua serovar 6a (strain ATCC BAA-680 / CLIP 11262).